Consider the following 949-residue polypeptide: AP-1 complex subunit beta-1 (949 aa).

Lys-318 is modified (N6-acetyllysine). The residue at position 574 (Tyr-574) is a 3'-nitrotyrosine. The interval 584 to 625 is disordered; it reads GGRGVVHKSLPPRTASSESAESPETAPTGAPPGEQPDVIPAQ. Over residues 594-611 the composition is skewed to low complexity; it reads PPRTASSESAESPETAPT.

The protein belongs to the adaptor complexes large subunit family. As to quaternary structure, adaptor protein complex 1 (AP-1) is a heterotetramer composed of two large adaptins (gamma-type subunit AP1G1 and beta-type subunit AP1B1), a medium adaptin (mu-type subunit AP1M1 or AP1M2) and a small adaptin (sigma-type subunit AP1S1 or AP1S2 or AP1S3). Widely expressed.

It localises to the golgi apparatus. Its subcellular location is the cytoplasmic vesicle. The protein localises to the clathrin-coated vesicle membrane. Subunit of clathrin-associated adaptor protein complex 1 that plays a role in protein sorting in the late-Golgi/trans-Golgi network (TGN) and/or endosomes. The AP complexes mediate both the recruitment of clathrin to membranes and the recognition of sorting signals within the cytosolic tails of transmembrane cargo molecules. In Homo sapiens (Human), this protein is AP-1 complex subunit beta-1 (AP1B1).